Consider the following 441-residue polypeptide: Ribulose bisphosphate carboxylase large chain (441 aa).

Residue lysine 5 is modified to N6,N6,N6-trimethyllysine. Residues asparagine 114 and threonine 164 each contribute to the substrate site. The active-site Proton acceptor is the lysine 166. Substrate is bound at residue lysine 168. Mg(2+) is bound by residues lysine 192, aspartate 194, and glutamate 195. N6-carboxylysine is present on lysine 192. The Proton acceptor role is filled by histidine 285. Residues arginine 286, histidine 318, and serine 370 each coordinate substrate.

Belongs to the RuBisCO large chain family. Type I subfamily. In terms of assembly, heterohexadecamer of 8 large chains and 8 small chains; disulfide-linked. The disulfide link is formed within the large subunit homodimers. Requires Mg(2+) as cofactor. The disulfide bond which can form in the large chain dimeric partners within the hexadecamer appears to be associated with oxidative stress and protein turnover.

It localises to the plastid. The protein resides in the chloroplast. The catalysed reaction is 2 (2R)-3-phosphoglycerate + 2 H(+) = D-ribulose 1,5-bisphosphate + CO2 + H2O. The enzyme catalyses D-ribulose 1,5-bisphosphate + O2 = 2-phosphoglycolate + (2R)-3-phosphoglycerate + 2 H(+). Its function is as follows. RuBisCO catalyzes two reactions: the carboxylation of D-ribulose 1,5-bisphosphate, the primary event in carbon dioxide fixation, as well as the oxidative fragmentation of the pentose substrate in the photorespiration process. Both reactions occur simultaneously and in competition at the same active site. The polypeptide is Ribulose bisphosphate carboxylase large chain (Glycyrrhiza echinata (Licorice)).